An 807-amino-acid polypeptide reads, in one-letter code: uncharacterized protein (807 aa).

Residues methionine 1–glycine 18 form the signal peptide. Topologically, residues leucine 19–glutamate 704 are extracellular. The span at threonine 133–glycine 142 shows a compositional bias: polar residues. Residues threonine 133–aspartate 171 form a disordered region. N-linked (GlcNAc...) asparagine; by host glycosylation is found at asparagine 277 and asparagine 660. The chain crosses the membrane as a helical span at residues valine 705 to isoleucine 725. Topologically, residues serine 726–asparagine 807 are cytoplasmic.

Its subcellular location is the host membrane. This is an uncharacterized protein from Magallana gigas (Pacific oyster).